A 333-amino-acid chain; its full sequence is Uroporphyrinogen decarboxylase (333 aa).

Substrate is bound by residues 22-26, D71, Y145, S200, and H310; that span reads RQAGR.

This sequence belongs to the uroporphyrinogen decarboxylase family. In terms of assembly, homodimer.

It localises to the cytoplasm. The catalysed reaction is uroporphyrinogen III + 4 H(+) = coproporphyrinogen III + 4 CO2. It functions in the pathway porphyrin-containing compound metabolism; protoporphyrin-IX biosynthesis; coproporphyrinogen-III from 5-aminolevulinate: step 4/4. In terms of biological role, catalyzes the decarboxylation of four acetate groups of uroporphyrinogen-III to yield coproporphyrinogen-III. This Thermoplasma acidophilum (strain ATCC 25905 / DSM 1728 / JCM 9062 / NBRC 15155 / AMRC-C165) protein is Uroporphyrinogen decarboxylase.